A 185-amino-acid polypeptide reads, in one-letter code: Ribosome-recycling factor (185 aa).

This sequence belongs to the RRF family.

The protein resides in the cytoplasm. Functionally, responsible for the release of ribosomes from messenger RNA at the termination of protein biosynthesis. May increase the efficiency of translation by recycling ribosomes from one round of translation to another. This chain is Ribosome-recycling factor, found in Beutenbergia cavernae (strain ATCC BAA-8 / DSM 12333 / CCUG 43141 / JCM 11478 / NBRC 16432 / NCIMB 13614 / HKI 0122).